A 462-amino-acid chain; its full sequence is Glutamate decarboxylase alpha (462 aa).

K273 is subject to N6-(pyridoxal phosphate)lysine.

It belongs to the group II decarboxylase family. Pyridoxal 5'-phosphate is required as a cofactor.

The catalysed reaction is L-glutamate + H(+) = 4-aminobutanoate + CO2. In terms of biological role, converts internalized glutamate to GABA and increases the internal pH. Involved in glutamate-dependent acid resistance in gastric fluid. In Listeria monocytogenes serovar 1/2a (strain ATCC BAA-679 / EGD-e), this protein is Glutamate decarboxylase alpha (gadA).